The sequence spans 262 residues: 1-(5-phosphoribosyl)-5-[(5-phosphoribosylamino)methylideneamino] imidazole-4-carboxamide isomerase (262 aa).

Asp8 serves as the catalytic Proton acceptor. Asp130 (proton donor) is an active-site residue.

It belongs to the HisA/HisF family.

Its subcellular location is the cytoplasm. It catalyses the reaction 1-(5-phospho-beta-D-ribosyl)-5-[(5-phospho-beta-D-ribosylamino)methylideneamino]imidazole-4-carboxamide = 5-[(5-phospho-1-deoxy-D-ribulos-1-ylimino)methylamino]-1-(5-phospho-beta-D-ribosyl)imidazole-4-carboxamide. Its pathway is amino-acid biosynthesis; L-histidine biosynthesis; L-histidine from 5-phospho-alpha-D-ribose 1-diphosphate: step 4/9. This chain is 1-(5-phosphoribosyl)-5-[(5-phosphoribosylamino)methylideneamino] imidazole-4-carboxamide isomerase, found in Chloroherpeton thalassium (strain ATCC 35110 / GB-78).